The chain runs to 108 residues: Phosphoribosyl-ATP pyrophosphatase (108 aa).

The protein belongs to the PRA-PH family.

The protein resides in the cytoplasm. It catalyses the reaction 1-(5-phospho-beta-D-ribosyl)-ATP + H2O = 1-(5-phospho-beta-D-ribosyl)-5'-AMP + diphosphate + H(+). Its pathway is amino-acid biosynthesis; L-histidine biosynthesis; L-histidine from 5-phospho-alpha-D-ribose 1-diphosphate: step 2/9. The sequence is that of Phosphoribosyl-ATP pyrophosphatase from Aromatoleum aromaticum (strain DSM 19018 / LMG 30748 / EbN1) (Azoarcus sp. (strain EbN1)).